Consider the following 344-residue polypeptide: Holliday junction branch migration complex subunit RuvB (344 aa).

Basic and acidic residues predominate over residues 1-25 (MTDSDPTLRPDRLPEDVQATDDRAL). The segment at 1–33 (MTDSDPTLRPDRLPEDVQATDDRALRPQSLDDF) is disordered. The segment at 1–186 (MTDSDPTLRP…FGIPTRLNFY (186 aa)) is large ATPase domain (RuvB-L). ATP-binding positions include Leu-25, Arg-26, Gly-67, Lys-70, Thr-71, Thr-72, 133–135 (EDF), Arg-176, Tyr-186, and Arg-223. Thr-71 serves as a coordination point for Mg(2+). The tract at residues 187–257 (TIAELDQIVA…IADSALTRLG (71 aa)) is small ATPAse domain (RuvB-S). The segment at 260–344 (DLGLDGADRR…PKRPDQGELI (85 aa)) is head domain (RuvB-H). DNA contacts are provided by Arg-296, Arg-315, and Arg-320.

It belongs to the RuvB family. In terms of assembly, homohexamer. Forms an RuvA(8)-RuvB(12)-Holliday junction (HJ) complex. HJ DNA is sandwiched between 2 RuvA tetramers; dsDNA enters through RuvA and exits via RuvB. An RuvB hexamer assembles on each DNA strand where it exits the tetramer. Each RuvB hexamer is contacted by two RuvA subunits (via domain III) on 2 adjacent RuvB subunits; this complex drives branch migration. In the full resolvosome a probable DNA-RuvA(4)-RuvB(12)-RuvC(2) complex forms which resolves the HJ.

Its subcellular location is the cytoplasm. The enzyme catalyses ATP + H2O = ADP + phosphate + H(+). Functionally, the RuvA-RuvB-RuvC complex processes Holliday junction (HJ) DNA during genetic recombination and DNA repair, while the RuvA-RuvB complex plays an important role in the rescue of blocked DNA replication forks via replication fork reversal (RFR). RuvA specifically binds to HJ cruciform DNA, conferring on it an open structure. The RuvB hexamer acts as an ATP-dependent pump, pulling dsDNA into and through the RuvAB complex. RuvB forms 2 homohexamers on either side of HJ DNA bound by 1 or 2 RuvA tetramers; 4 subunits per hexamer contact DNA at a time. Coordinated motions by a converter formed by DNA-disengaged RuvB subunits stimulates ATP hydrolysis and nucleotide exchange. Immobilization of the converter enables RuvB to convert the ATP-contained energy into a lever motion, pulling 2 nucleotides of DNA out of the RuvA tetramer per ATP hydrolyzed, thus driving DNA branch migration. The RuvB motors rotate together with the DNA substrate, which together with the progressing nucleotide cycle form the mechanistic basis for DNA recombination by continuous HJ branch migration. Branch migration allows RuvC to scan DNA until it finds its consensus sequence, where it cleaves and resolves cruciform DNA. The chain is Holliday junction branch migration complex subunit RuvB from Jannaschia sp. (strain CCS1).